The following is a 273-amino-acid chain: Formamidopyrimidine-DNA glycosylase (273 aa).

The Schiff-base intermediate with DNA role is filled by P2. The active-site Proton donor is E3. K57 functions as the Proton donor; for beta-elimination activity in the catalytic mechanism. DNA contacts are provided by H91, R110, and K151. The segment at 236–270 (QVYGRKDEACNDCGTIIEAKVIGQRNSYFCPHCQM) adopts an FPG-type zinc-finger fold. R260 acts as the Proton donor; for delta-elimination activity in catalysis.

It belongs to the FPG family. Monomer. It depends on Zn(2+) as a cofactor.

It carries out the reaction Hydrolysis of DNA containing ring-opened 7-methylguanine residues, releasing 2,6-diamino-4-hydroxy-5-(N-methyl)formamidopyrimidine.. It catalyses the reaction 2'-deoxyribonucleotide-(2'-deoxyribose 5'-phosphate)-2'-deoxyribonucleotide-DNA = a 3'-end 2'-deoxyribonucleotide-(2,3-dehydro-2,3-deoxyribose 5'-phosphate)-DNA + a 5'-end 5'-phospho-2'-deoxyribonucleoside-DNA + H(+). In terms of biological role, involved in base excision repair of DNA damaged by oxidation or by mutagenic agents. Acts as a DNA glycosylase that recognizes and removes damaged bases. Has a preference for oxidized purines, such as 7,8-dihydro-8-oxoguanine (8-oxoG). Has AP (apurinic/apyrimidinic) lyase activity and introduces nicks in the DNA strand. Cleaves the DNA backbone by beta-delta elimination to generate a single-strand break at the site of the removed base with both 3'- and 5'-phosphates. The chain is Formamidopyrimidine-DNA glycosylase from Actinobacillus pleuropneumoniae serotype 5b (strain L20).